A 402-amino-acid polypeptide reads, in one-letter code: Envelope glycoprotein D (402 aa).

An N-terminal signal peptide occupies residues 1–17 (MLLAALLAALVARTTLG). Cystine bridges form between C66–C189, C105–C205, and C117–C126. The profusion stretch occupies residues 238-316 (YRKNGRTLPR…RPTPRPPRPE (79 aa)). Residues 252 to 350 (ATPYAIDPAR…PRTPAAPGVS (99 aa)) are disordered. Residues 269 to 278 (PRPRPRPRPR) show a composition bias toward basic residues. Residues 282–292 (EPAPATPAPPD) are compositionally biased toward pro residues. Residues 293–304 (RLPEPATRDHAA) show a composition bias toward basic and acidic residues. A helical transmembrane segment spans residues 356-376 (IVGTGTAMGALLVGVCVYIFF).

This sequence belongs to the herpesviridae glycoprotein D family. Post-translationally, not N-glycosylated.

The protein resides in the virion membrane. Functionally, envelope glycoprotein that binds to the host cell entry receptor NECTIN1, promoting the virus entry into host cells. In contrast, does not use host TNFRSF14 as receptor. May trigger fusion with host membrane, by recruiting the fusion machinery composed of gB and gH/gL. The protein is Envelope glycoprotein D of Suid herpesvirus 1 (strain Rice) (SuHV-1).